Reading from the N-terminus, the 57-residue chain is Large ribosomal subunit protein bL32 (57 aa).

A disordered region spans residues 1–25 (MATPSNKNSKSHKRNRRGHIGLNVP). Over residues 9–19 (SKSHKRNRRGH) the composition is skewed to basic residues.

Belongs to the bacterial ribosomal protein bL32 family.

This chain is Large ribosomal subunit protein bL32, found in Leuconostoc mesenteroides subsp. mesenteroides (strain ATCC 8293 / DSM 20343 / BCRC 11652 / CCM 1803 / JCM 6124 / NCDO 523 / NBRC 100496 / NCIMB 8023 / NCTC 12954 / NRRL B-1118 / 37Y).